Consider the following 254-residue polypeptide: tRNA (guanine-N(7)-)-methyltransferase (254 aa).

Positions 1–34 (MNTNTPAHPPEGAPLSEATQAALASAEHAPDSPG) are disordered. The S-adenosyl-L-methionine site is built by glutamate 87, glutamate 112, aspartate 139, and aspartate 162. Aspartate 162 is an active-site residue. Substrate contacts are provided by residues lysine 166, aspartate 198, and 233–236 (TKFE).

It belongs to the class I-like SAM-binding methyltransferase superfamily. TrmB family.

The catalysed reaction is guanosine(46) in tRNA + S-adenosyl-L-methionine = N(7)-methylguanosine(46) in tRNA + S-adenosyl-L-homocysteine. Its pathway is tRNA modification; N(7)-methylguanine-tRNA biosynthesis. In terms of biological role, catalyzes the formation of N(7)-methylguanine at position 46 (m7G46) in tRNA. The chain is tRNA (guanine-N(7)-)-methyltransferase from Bordetella bronchiseptica (strain ATCC BAA-588 / NCTC 13252 / RB50) (Alcaligenes bronchisepticus).